The sequence spans 230 residues: MNEMSSVRLPFRDGYYDVRPTKIVALAKNYAEHAREMGSEPPEEPIIFLKPPSALIGPGSSIILPRRSKRVDHEVELAVIMGKRAKNVPASKAFDYILGYTIILDITARDLQAEARKKGYPWTISKGFDTFAPIGPRVVDSRELDPSDLEIGLKVNGKIRQLGRTSQMIFKIPELIEYISHIMTLEPGDIIATGTPPGVGPLRHGDRIEAWIEGIGKMEFDVLAEDSILC.

3 residues coordinate a divalent metal cation: Glu74, Glu76, and Asp105.

It belongs to the FAH family.

This is an uncharacterized protein from Pyrococcus horikoshii (strain ATCC 700860 / DSM 12428 / JCM 9974 / NBRC 100139 / OT-3).